Reading from the N-terminus, the 281-residue chain is Proteasome subunit beta (281 aa).

A propeptide spans methionine 1–glycine 53 (removed in mature form; by autocatalysis). Threonine 54 functions as the Nucleophile in the catalytic mechanism.

Belongs to the peptidase T1B family. The 20S proteasome core is composed of 14 alpha and 14 beta subunits that assemble into four stacked heptameric rings, resulting in a barrel-shaped structure. The two inner rings, each composed of seven catalytic beta subunits, are sandwiched by two outer rings, each composed of seven alpha subunits. The catalytic chamber with the active sites is on the inside of the barrel. Has probably a gated structure, the ends of the cylinder being occluded by the N-termini of the alpha-subunits. Is likely capped by the proteasome-associated ATPase, ARC.

Its subcellular location is the cytoplasm. The enzyme catalyses Cleavage of peptide bonds with very broad specificity.. The protein operates within protein degradation; proteasomal Pup-dependent pathway. Its activity is regulated as follows. The formation of the proteasomal ATPase ARC-20S proteasome complex, likely via the docking of the C-termini of ARC into the intersubunit pockets in the alpha-rings, may trigger opening of the gate for substrate entry. Interconversion between the open-gate and close-gate conformations leads to a dynamic regulation of the 20S proteasome proteolysis activity. Peptidolytic activity is completely inhibited by lactacystin, and to a lesser extent, by N-acetyl-Leu-Leu-norleucinal (Ac-LLnL) and benzoyloxycarbonyl-Leu-Leu-Leu-vinylsulfone (Z-LLL-VS) in vitro. In terms of biological role, component of the proteasome core, a large protease complex with broad specificity involved in protein degradation. The S.coelicolor proteasome is able to cleave oligopeptides after hydrophobic residues, but not after basic or acidic residues, thus displaying chymotrypsin-like activity but not trypsin-like activity. This is Proteasome subunit beta from Streptomyces coelicolor (strain ATCC BAA-471 / A3(2) / M145).